The sequence spans 85 residues: Protein BTH_I0359 (85 aa).

This chain is Protein BTH_I0359, found in Burkholderia thailandensis (strain ATCC 700388 / DSM 13276 / CCUG 48851 / CIP 106301 / E264).